A 65-amino-acid chain; its full sequence is Large ribosomal subunit protein bL35 (65 aa).

This sequence belongs to the bacterial ribosomal protein bL35 family.

This Yersinia enterocolitica serotype O:8 / biotype 1B (strain NCTC 13174 / 8081) protein is Large ribosomal subunit protein bL35.